The chain runs to 27 residues: GLRDFNVAVRASNGKYWTRRPESGTLV.

Its subcellular location is the secreted. The protein resides in the nematocyst. The chain is Cationic protein C1 from Bunodosoma caissarum (Sea anemone).